The chain runs to 394 residues: Ribulose bisphosphate carboxylase large chain (394 aa).

K5 carries the post-translational modification N6,N6,N6-trimethyllysine. Residues N114 and T164 each contribute to the substrate site. The Proton acceptor role is filled by K166. K168 is a substrate binding site. K192, D194, and E195 together coordinate Mg(2+). K192 bears the N6-carboxylysine mark. Residue H285 is the Proton acceptor of the active site. Residues R286, H318, and S370 each contribute to the substrate site.

The protein belongs to the RuBisCO large chain family. Type I subfamily. In terms of assembly, heterohexadecamer of 8 large chains and 8 small chains; disulfide-linked. The disulfide link is formed within the large subunit homodimers. It depends on Mg(2+) as a cofactor. Post-translationally, the disulfide bond which can form in the large chain dimeric partners within the hexadecamer appears to be associated with oxidative stress and protein turnover.

It localises to the plastid. The protein resides in the chloroplast. It catalyses the reaction 2 (2R)-3-phosphoglycerate + 2 H(+) = D-ribulose 1,5-bisphosphate + CO2 + H2O. The catalysed reaction is D-ribulose 1,5-bisphosphate + O2 = 2-phosphoglycolate + (2R)-3-phosphoglycerate + 2 H(+). Functionally, ruBisCO catalyzes two reactions: the carboxylation of D-ribulose 1,5-bisphosphate, the primary event in carbon dioxide fixation, as well as the oxidative fragmentation of the pentose substrate in the photorespiration process. Both reactions occur simultaneously and in competition at the same active site. This is Ribulose bisphosphate carboxylase large chain (rbcL) from Alisma plantago-aquatica (Common water-plantain).